Reading from the N-terminus, the 723-residue chain is Malonamoyl-CoA synthetase vrtB (723 aa).

This sequence belongs to the ATP-dependent AMP-binding enzyme family.

It functions in the pathway secondary metabolite biosynthesis; terpenoid biosynthesis. Functionally, malonamoyl-CoA synthetase; part of the gene cluster that mediates the biosynthesis of viridicatumtoxin, a tetracycline-like fungal meroterpenoid with a unique, fused spirobicyclic ring system. The first step of the pathway is the production of the malonamoyl-CoA starter unit for the polyketide synthase vrtA. The aldolase vrtJ may be involved in the synthesis of the malonamate substrate for malonamoyl-CoA synthetase vrtB. The polyketide synthase vrtA then may utilize the malonamoyl-CoA starter unit, followed by sequential condensation of eight malonyl-CoA units to form the polyketide backbone. The cyclization of the last ring could be mediated by the lactamase-like protein vrtG. The proposed post-PKS tailoring steps are a hydroxylation at C5 catalyzed the cytochrome P450 monooxygenase vrtE, a hydroxylation at C12a catalyzed by VrtH and/or VrtI, and an O-methylation by the O-methyltransferase vrtF. VrtC is then proposed to catalyze the transfer of a geranyl group synthesized by vrtD to the aromatic C ring of the tetracyclic polyketide intermediate of viridicatumtoxin to yield previridicatumtoxin. Finally, the cytochrome P450 monooxygenase vrtK catalyzes the spirocyclization of the geranyl moiety of previridicatumtoxin to afford viridicatumtoxin. This is Malonamoyl-CoA synthetase vrtB from Penicillium aethiopicum.